We begin with the raw amino-acid sequence, 122 residues long: Sperm-egg fusion protein LLCFC1 (122 aa).

A signal peptide spans 1–28 (MPPLAPQLCRAVFLVPILLLLQVKPLNG). A disordered region spans residues 27-51 (NGSPGPKDGSQTEKTPSADQNQEQF). A compositionally biased stretch (polar residues) spans 38–49 (TEKTPSADQNQE).

It is found in the secreted. Functionally, sperm protein required for fusion of sperm with the egg membrane during fertilization. In Homo sapiens (Human), this protein is Sperm-egg fusion protein LLCFC1.